Reading from the N-terminus, the 273-residue chain is Dermonecrotic toxin LspaSicTox-alphaIA1ii (273 aa).

The active site involves H5. Positions 25 and 27 each coordinate Mg(2+). Residue H41 is the Nucleophile of the active site. 2 cysteine pairs are disulfide-bonded: C45–C51 and C47–C190. D85 contacts Mg(2+).

Belongs to the arthropod phospholipase D family. Class II subfamily. Mg(2+) serves as cofactor. Expressed by the venom gland.

Its subcellular location is the secreted. It catalyses the reaction an N-(acyl)-sphingosylphosphocholine = an N-(acyl)-sphingosyl-1,3-cyclic phosphate + choline. It carries out the reaction an N-(acyl)-sphingosylphosphoethanolamine = an N-(acyl)-sphingosyl-1,3-cyclic phosphate + ethanolamine. The catalysed reaction is a 1-acyl-sn-glycero-3-phosphocholine = a 1-acyl-sn-glycero-2,3-cyclic phosphate + choline. The enzyme catalyses a 1-acyl-sn-glycero-3-phosphoethanolamine = a 1-acyl-sn-glycero-2,3-cyclic phosphate + ethanolamine. In terms of biological role, dermonecrotic toxins cleave the phosphodiester linkage between the phosphate and headgroup of certain phospholipids (sphingolipid and lysolipid substrates), forming an alcohol (often choline) and a cyclic phosphate. This toxin acts on sphingomyelin (SM). It may also act on ceramide phosphoethanolamine (CPE), lysophosphatidylcholine (LPC) and lysophosphatidylethanolamine (LPE), but not on lysophosphatidylserine (LPS), and lysophosphatidylglycerol (LPG). It acts by transphosphatidylation, releasing exclusively cyclic phosphate products as second products. Induces dermonecrosis, hemolysis, increased vascular permeability, edema, inflammatory response, and platelet aggregation. The polypeptide is Dermonecrotic toxin LspaSicTox-alphaIA1ii (Loxosceles spadicea (Recluse spider)).